Consider the following 529-residue polypeptide: Beta-glucosidase 11 (529 aa).

Positions 1-25 (MAVAGAMVMSGALLLLHLLAFTCVA) are cleaved as a signal peptide. Residues glutamine 54, histidine 157, and 202-203 (NE) contribute to the a beta-D-glucoside site. Catalysis depends on glutamate 203, which acts as the Proton donor. The cysteines at positions 222 and 230 are disulfide-linked. Tyrosine 346 is a binding site for a beta-D-glucoside. Residue asparagine 361 is glycosylated (N-linked (GlcNAc...) asparagine). Glutamate 417 lines the a beta-D-glucoside pocket. Residue glutamate 417 is the Nucleophile of the active site. An N-linked (GlcNAc...) asparagine glycan is attached at asparagine 425. Residues tryptophan 466, 473–474 (EW), and phenylalanine 482 each bind a beta-D-glucoside.

It belongs to the glycosyl hydrolase 1 family.

The enzyme catalyses Hydrolysis of terminal, non-reducing beta-D-glucosyl residues with release of beta-D-glucose.. This chain is Beta-glucosidase 11 (BGLU11), found in Oryza sativa subsp. japonica (Rice).